The primary structure comprises 92 residues: N(2)-fixation sustaining protein CowN (92 aa).

This sequence belongs to the CowN family.

Functionally, is required to sustain N(2)-dependent growth in the presence of low levels of carbon monoxide (CO). Probably acts by protecting the N(2) fixation ability of the nitrogenase complex, which is inactivated in the presence of CO. This is N(2)-fixation sustaining protein CowN from Rhodopseudomonas palustris (strain BisB18).